The primary structure comprises 278 residues: Pantothenate synthetase (278 aa).

26 to 33 (MGNLHEGH) provides a ligand contact to ATP. Residue H33 is the Proton donor of the active site. Q57 contributes to the (R)-pantoate binding site. A beta-alanine-binding site is contributed by Q57. Residue 144-147 (GKKD) participates in ATP binding. Residue Q150 coordinates (R)-pantoate. Residues G173 and 181–184 (LSSR) contribute to the ATP site.

It belongs to the pantothenate synthetase family. Homodimer.

Its subcellular location is the cytoplasm. The enzyme catalyses (R)-pantoate + beta-alanine + ATP = (R)-pantothenate + AMP + diphosphate + H(+). The protein operates within cofactor biosynthesis; (R)-pantothenate biosynthesis; (R)-pantothenate from (R)-pantoate and beta-alanine: step 1/1. In terms of biological role, catalyzes the condensation of pantoate with beta-alanine in an ATP-dependent reaction via a pantoyl-adenylate intermediate. This Neisseria meningitidis serogroup B (strain ATCC BAA-335 / MC58) protein is Pantothenate synthetase.